The sequence spans 63 residues: Large ribosomal subunit protein eL37 (63 aa).

Zn(2+) contacts are provided by Cys-20, Cys-23, Cys-35, and Cys-38. The C4-type zinc finger occupies 20–38 (CRRCGRRAFNVKKGYCAAC).

Belongs to the eukaryotic ribosomal protein eL37 family. The cofactor is Zn(2+).

Functionally, binds to the 23S rRNA. The polypeptide is Large ribosomal subunit protein eL37 (Thermococcus gammatolerans (strain DSM 15229 / JCM 11827 / EJ3)).